The sequence spans 549 residues: Lysine-specific demethylase JMJ31 (549 aa).

The 172-residue stretch at 125–296 (DYRPGQIYLA…SNMPEHMDSY (172 aa)) folds into the JmjC domain. Fe cation-binding residues include His-184, Asp-186, and His-266.

This sequence belongs to the JARID1 histone demethylase family. Requires Fe(2+) as cofactor. In terms of tissue distribution, mostly expressed in leaves and inflorescences, and, to a lower extent, in roots, siliques and stems.

It is found in the nucleus. Its function is as follows. May function as histone H3 lysine demethylase and be involved in regulation of gene expression. The chain is Lysine-specific demethylase JMJ31 from Arabidopsis thaliana (Mouse-ear cress).